The chain runs to 202 residues: Dephospho-CoA kinase (202 aa).

The region spanning 4-202 is the DPCK domain; the sequence is FLGLTGGIAT…EGVCHKSGMS (199 aa). 12–17 provides a ligand contact to ATP; sequence ATGKTT.

The protein belongs to the CoaE family.

The protein localises to the cytoplasm. The catalysed reaction is 3'-dephospho-CoA + ATP = ADP + CoA + H(+). The protein operates within cofactor biosynthesis; coenzyme A biosynthesis; CoA from (R)-pantothenate: step 5/5. Functionally, catalyzes the phosphorylation of the 3'-hydroxyl group of dephosphocoenzyme A to form coenzyme A. This is Dephospho-CoA kinase from Latilactobacillus sakei subsp. sakei (strain 23K) (Lactobacillus sakei subsp. sakei).